The chain runs to 249 residues: 2,3-bisphosphoglycerate-dependent phosphoglycerate mutase (249 aa).

Residues 7-14 (RHGESEWN), 20-21 (TG), Arg-59, 86-89 (ERHY), Lys-97, 113-114 (RR), and 182-183 (GN) each bind substrate. Residue His-8 is the Tele-phosphohistidine intermediate of the active site. The active-site Proton donor/acceptor is the Glu-86.

This sequence belongs to the phosphoglycerate mutase family. BPG-dependent PGAM subfamily.

It carries out the reaction (2R)-2-phosphoglycerate = (2R)-3-phosphoglycerate. The protein operates within carbohydrate degradation; glycolysis; pyruvate from D-glyceraldehyde 3-phosphate: step 3/5. Its function is as follows. Catalyzes the interconversion of 2-phosphoglycerate and 3-phosphoglycerate. The sequence is that of 2,3-bisphosphoglycerate-dependent phosphoglycerate mutase from Lachnoclostridium phytofermentans (strain ATCC 700394 / DSM 18823 / ISDg) (Clostridium phytofermentans).